The following is a 451-amino-acid chain: LisH domain-containing protein C1711.05 (451 aa).

Residues 6-38 form the LisH domain; that stretch reads MKSKVCPLIYHFLQENGYVKTAQTFLKETGDKD. The segment at 59–394 is disordered; that stretch reads PYLTTEDVGK…VGDPSQWDFA (336 aa). Over residues 73 to 98 the composition is skewed to basic and acidic residues; the sequence is KESLEKSNDDSQKISKKGAPPEKAHS. The segment covering 99 to 120 has biased composition (low complexity); that stretch reads SSEASGSGSSSDESDSSSSESE. A compositionally biased stretch (acidic residues) spans 135-145; it reads SESESSSEDSD. The segment covering 146–174 has biased composition (low complexity); the sequence is SSSSSSDSESESSSEGSDSSSSSSSSESE. Residues 189 to 199 show a composition bias toward acidic residues; the sequence is SESESSSEDSD. The segment covering 200 to 228 has biased composition (low complexity); it reads SSSSSSDSESESSSEGSDSSSSSSSSESE. Composition is skewed to acidic residues over residues 243–253 and 278–300; these read SESESSSEDSD and DSED…EDSD. Low complexity predominate over residues 301–319; it reads STSSSSDSDSSSSSEDGNS. The span at 320–332 shows a compositional bias: polar residues; sequence NTDTTTSGEVSAQ. Residues 333 to 343 show a composition bias toward low complexity; sequence SSTNSTSSEES. Residues 344-365 are compositionally biased toward basic and acidic residues; that stretch reads TSVKDEDSSKIHDKSLKRKHED. Positions 369 to 380 are enriched in low complexity; that stretch reads STSTKSSRTTKT.

It localises to the nucleus. It is found in the nucleolus. This chain is LisH domain-containing protein C1711.05, found in Schizosaccharomyces pombe (strain 972 / ATCC 24843) (Fission yeast).